Here is a 253-residue protein sequence, read N- to C-terminus: Transcription factor bHLH106 (253 aa).

The bHLH domain maps to 66–115 (AALRNHKEAERRRRERINSHLNKLRNVLSCNSKTDKATLLAKVVQRVREL).

As to quaternary structure, homodimer.

The protein resides in the nucleus. This chain is Transcription factor bHLH106 (BHLH106), found in Arabidopsis thaliana (Mouse-ear cress).